The primary structure comprises 312 residues: Olfactory receptor 6B2 (312 aa).

At Met1–Tyr25 the chain is on the extracellular side. An N-linked (GlcNAc...) asparagine glycan is attached at Asn5. The helical transmembrane segment at Leu26–Ile46 threads the bilayer. Topologically, residues Leu47–Ser54 are cytoplasmic. A helical transmembrane segment spans residues Leu55 to Ser75. Topologically, residues Asp76–Thr99 are extracellular. A disulfide bridge connects residues Cys97 and Cys189. The helical transmembrane segment at Gln100–Tyr120 threads the bilayer. Residues Asp121–Gly139 are Cytoplasmic-facing. A helical transmembrane segment spans residues Leu140 to Val160. Residues Cys161–Glu196 are Extracellular-facing. The chain crosses the membrane as a helical span at residues Leu197–Ser217. Residues Tyr218 to Ala237 lie on the Cytoplasmic side of the membrane. The helical transmembrane segment at Phe238 to Met258 threads the bilayer. Residues Tyr259–Asn271 are Extracellular-facing. The helical transmembrane segment at Lys272–Leu292 threads the bilayer. At Arg293–His312 the chain is on the cytoplasmic side.

Belongs to the G-protein coupled receptor 1 family.

The protein localises to the cell membrane. In terms of biological role, odorant receptor. The sequence is that of Olfactory receptor 6B2 (OR6B2) from Homo sapiens (Human).